A 275-amino-acid chain; its full sequence is NH(3)-dependent NAD(+) synthetase (275 aa).

ATP is bound at residue 50–57 (GISGGVDS). Asp56 contacts Mg(2+). Residue Arg147 participates in deamido-NAD(+) binding. Thr167 contributes to the ATP binding site. Glu172 lines the Mg(2+) pocket. 2 residues coordinate deamido-NAD(+): Lys180 and Asp187. ATP is bound by residues Lys196 and Thr218. 267–268 (HK) contributes to the deamido-NAD(+) binding site.

This sequence belongs to the NAD synthetase family. In terms of assembly, homodimer.

The enzyme catalyses deamido-NAD(+) + NH4(+) + ATP = AMP + diphosphate + NAD(+) + H(+). It participates in cofactor biosynthesis; NAD(+) biosynthesis; NAD(+) from deamido-NAD(+) (ammonia route): step 1/1. Functionally, catalyzes the ATP-dependent amidation of deamido-NAD to form NAD. Uses ammonia as a nitrogen source. This Pseudomonas savastanoi pv. phaseolicola (strain 1448A / Race 6) (Pseudomonas syringae pv. phaseolicola (strain 1448A / Race 6)) protein is NH(3)-dependent NAD(+) synthetase.